The chain runs to 109 residues: MFELKTVALFVVTAIAEIVGCYLPYLWLRQSGSIWLLLPAALSLALFAWLLSLHPEASGRVYAAYGGIYVAVALGWLWLVDGIKPTNWDVAGVVFTFIGMGIIMFAPRA.

Transmembrane regions (helical) follow at residues 7-27 (VALFVVTAIAEIVGCYLPYLW), 33-53 (SIWLLLPAALSLALFAWLLSL), 63-83 (AAYGGIYVAVALGWLWLVDGI), and 87-107 (NWDVAGVVFTFIGMGIIMFAP).

This sequence belongs to the UPF0060 family.

Its subcellular location is the cell inner membrane. The protein is UPF0060 membrane protein HEAR0108 of Herminiimonas arsenicoxydans.